A 193-amino-acid polypeptide reads, in one-letter code: Acyl carrier protein phosphodiesterase (193 aa).

This sequence belongs to the AcpH family.

The enzyme catalyses holo-[ACP] + H2O = apo-[ACP] + (R)-4'-phosphopantetheine + H(+). In terms of biological role, converts holo-ACP to apo-ACP by hydrolytic cleavage of the phosphopantetheine prosthetic group from ACP. This chain is Acyl carrier protein phosphodiesterase, found in Klebsiella pneumoniae subsp. pneumoniae (strain ATCC 700721 / MGH 78578).